The following is a 444-amino-acid chain: MPFIVNTDAERAEMLREIGVENFEALIADIPEEIRLKKALDLFPAMGEPEVKSLLEKMASGNAATCDHVSFLGAGAYDHFIPSAVKTIASRSEFYTAYTPYQAEVSQGTLQAIYEYQSVMCRLYGMDVANASMYDGASALAEAALIALNVTGRNGIVVAGKLHPYTSQVLETYLEAAGDRSIVQNGLENGIGSVEALEALVSSETAAVIVQQPNFYGCLEEVEAIGEIARKNGALFIVSADPVSLGVLEAPGNYGADIAVGEGQSVGNAQSFGGPYLGILTVKQAHVRKIPGRLVGMTKDKDGNDGFILTLQTREQHIRREKATSNICSNQALCALQSVVHLSLLGKEGIRDVANRSMQKAHYLADRIAELPGYSMKFSAPFFREFVVETPVPSATIIEKMLEKKVFAGVDLSAWGEDGLLVAVTEKRTKEELDSFVSELAALG.

The protein belongs to the GcvP family. N-terminal subunit subfamily. In terms of assembly, the glycine cleavage system is composed of four proteins: P, T, L and H. In this organism, the P 'protein' is a heterodimer of two subunits.

The enzyme catalyses N(6)-[(R)-lipoyl]-L-lysyl-[glycine-cleavage complex H protein] + glycine + H(+) = N(6)-[(R)-S(8)-aminomethyldihydrolipoyl]-L-lysyl-[glycine-cleavage complex H protein] + CO2. In terms of biological role, the glycine cleavage system catalyzes the degradation of glycine. The P protein binds the alpha-amino group of glycine through its pyridoxal phosphate cofactor; CO(2) is released and the remaining methylamine moiety is then transferred to the lipoamide cofactor of the H protein. The polypeptide is Probable glycine dehydrogenase (decarboxylating) subunit 1 (Chlorobaculum tepidum (strain ATCC 49652 / DSM 12025 / NBRC 103806 / TLS) (Chlorobium tepidum)).